Consider the following 690-residue polypeptide: Amino-acid acetyltransferase, mitochondrial (690 aa).

Positions 62–93 are disordered; the sequence is RFPSVKKPKPPIPRQNQGAVETQSGKENEKPG. Over residues 75-84 the composition is skewed to polar residues; that stretch reads RQNQGAVETQ. In terms of domain architecture, N-acetyltransferase spans 508 to 679; that stretch reads DGHHLTLDDP…DYEAVCRSIQ (172 aa).

Belongs to the acetyltransferase family.

The protein localises to the mitochondrion. The enzyme catalyses L-glutamate + acetyl-CoA = N-acetyl-L-glutamate + CoA + H(+). It functions in the pathway amino-acid biosynthesis; L-arginine biosynthesis; N(2)-acetyl-L-ornithine from L-glutamate: step 1/4. N-acetylglutamate synthase involved in arginine biosynthesis. This is Amino-acid acetyltransferase, mitochondrial (arg2) from Talaromyces stipitatus (strain ATCC 10500 / CBS 375.48 / QM 6759 / NRRL 1006) (Penicillium stipitatum).